Here is a 258-residue protein sequence, read N- to C-terminus: Enterotoxin type G (258 aa).

Residues 1 to 25 form the signal peptide; that stretch reads MKKLSTVIIILILEIVFHNMNYVNA. Cys116 and Cys133 are disulfide-bonded.

It belongs to the staphylococcal/streptococcal toxin family.

The protein resides in the secreted. Its function is as follows. Staphylococcal enterotoxins cause the intoxication staphylococcal food poisoning syndrome. The illness is characterized by high fever, hypotension, diarrhea, shock, and in some cases death. The chain is Enterotoxin type G (entG) from Staphylococcus aureus (strain N315).